The following is a 154-amino-acid chain: Lipoprotein signal peptidase (154 aa).

The next 2 helical transmembrane spans lie at 55-75 (GHMW…IYIM) and 84-104 (LFSI…IDRV). Active-site residues include aspartate 111 and aspartate 129. A helical transmembrane segment spans residues 124–144 (IFNVADASLSVGVVLMLVYVF).

It belongs to the peptidase A8 family.

The protein localises to the cell membrane. It catalyses the reaction Release of signal peptides from bacterial membrane prolipoproteins. Hydrolyzes -Xaa-Yaa-Zaa-|-(S,diacylglyceryl)Cys-, in which Xaa is hydrophobic (preferably Leu), and Yaa (Ala or Ser) and Zaa (Gly or Ala) have small, neutral side chains.. It participates in protein modification; lipoprotein biosynthesis (signal peptide cleavage). Functionally, this protein specifically catalyzes the removal of signal peptides from prolipoproteins. The chain is Lipoprotein signal peptidase from Listeria monocytogenes serovar 1/2a (strain ATCC BAA-679 / EGD-e).